A 384-amino-acid polypeptide reads, in one-letter code: Outer membrane protein assembly factor BamB (384 aa).

Residues 1-21 form the signal peptide; the sequence is MKLTLKRKFIAVLALTSLLGA. Cys-22 carries the N-palmitoyl cysteine lipid modification. Cys-22 carries S-diacylglycerol cysteine lipidation.

The protein belongs to the BamB family. In terms of assembly, part of the Bam complex.

Its subcellular location is the cell outer membrane. Part of the outer membrane protein assembly complex, which is involved in assembly and insertion of beta-barrel proteins into the outer membrane. This is Outer membrane protein assembly factor BamB from Taylorella asinigenitalis (strain MCE3).